The primary structure comprises 392 residues: Galactokinase (392 aa).

Alpha-D-galactose-binding residues include Arg37, Glu43, His44, and Asp46. The ATP site is built by Gly136, Gly138, Ser140, and Ser141. Asp186 serves as a coordination point for alpha-D-galactose. Residue Asp186 is the Proton acceptor of the active site. Ser230 is modified (phosphoserine). Tyr236 contributes to the alpha-D-galactose binding site.

The protein belongs to the GHMP kinase family. GalK subfamily. As to quaternary structure, homodimer.

It carries out the reaction alpha-D-galactose + ATP = alpha-D-galactose 1-phosphate + ADP + H(+). The protein operates within carbohydrate metabolism; galactose metabolism. Functionally, catalyzes the transfer of a phosphate from ATP to alpha-D-galactose and participates in the first committed step in the catabolism of galactose. The polypeptide is Galactokinase (GALK1) (Bos taurus (Bovine)).